The sequence spans 286 residues: MLHDVGSINVNWFEAALLGLVQGLTEFLPISSSAHLRIVGSFLPNAADPGAAFTAITQLGTETAVIVYFWRDIVRIVKAWAGTLTRRVPTDDPDARMGWLVILGSLPIIVLGLIFQDQIESVLRSLWIVATMLIVFGLILAVADAVGRQERELTRLTYKHGIFYGFAQAMALIPGVSRSGGTITAGLLMGYTREAAARYSFLLAIPAVFGSGLYQLYKVMSKDGITGPYGLPETALATLIAFVVGYVIIGWFLKFVSTRSYRLFVWYRIFLGLALYLLLGFNVISA.

A run of 7 helical transmembrane segments spans residues 50–70 (GAAF…VYFW), 97–117 (MGWL…IFQD), 126–146 (LWIV…ADAV), 156–176 (LTYK…IPGV), 200–220 (SFLL…YKVM), 236–256 (LATL…LKFV), and 264–284 (FVWY…FNVI).

This sequence belongs to the UppP family.

Its subcellular location is the cell membrane. The enzyme catalyses di-trans,octa-cis-undecaprenyl diphosphate + H2O = di-trans,octa-cis-undecaprenyl phosphate + phosphate + H(+). Functionally, catalyzes the dephosphorylation of undecaprenyl diphosphate (UPP). Confers resistance to bacitracin. The sequence is that of Undecaprenyl-diphosphatase from Arthrobacter sp. (strain FB24).